Here is a 208-residue protein sequence, read N- to C-terminus: Large ribosomal subunit protein uL3 (208 aa).

Q149 carries the N5-methylglutamine modification.

It belongs to the universal ribosomal protein uL3 family. As to quaternary structure, part of the 50S ribosomal subunit. Forms a cluster with proteins L14 and L19. Methylated by PrmB.

In terms of biological role, one of the primary rRNA binding proteins, it binds directly near the 3'-end of the 23S rRNA, where it nucleates assembly of the 50S subunit. This is Large ribosomal subunit protein uL3 from Haemophilus ducreyi (strain 35000HP / ATCC 700724).